Consider the following 123-residue polypeptide: MIQEQTMLNVADNSGARRVMCIKVLGGSHRRYAGVGDIIKITIKEAIPRGKVKKGDVLKAVVVRTKKGVRRPDGSVIRFDGNACVILNNNSEQPVGTRIFGPVTRELRNERFMKIISLAPEVL.

The protein belongs to the universal ribosomal protein uL14 family. As to quaternary structure, part of the 50S ribosomal subunit. Forms a cluster with proteins L3 and L19. In the 70S ribosome, L14 and L19 interact and together make contacts with the 16S rRNA in bridges B5 and B8.

Its function is as follows. Binds to 23S rRNA. Forms part of two intersubunit bridges in the 70S ribosome. The sequence is that of Large ribosomal subunit protein uL14 from Buchnera aphidicola subsp. Acyrthosiphon kondoi (Acyrthosiphon kondoi symbiotic bacterium).